A 227-amino-acid polypeptide reads, in one-letter code: Isopentenyl-diphosphate Delta-isomerase 1 (227 aa).

K36 contributes to the substrate binding site. The Mg(2+) site is built by H40 and H51. The Nudix hydrolase domain maps to 49 to 199 (LLHRAFSVFL…EIKITPWFQI (151 aa)). Substrate-binding residues include R70 and K74. C86 (proton acceptor) is an active-site residue. Residue S87 participates in substrate binding. Residues E146 and E148 each coordinate Mg(2+). E148 is an active-site residue. K176 carries the N6-acetyllysine modification.

It belongs to the IPP isomerase type 1 family. As to quaternary structure, monomer. Mg(2+) is required as a cofactor.

It localises to the peroxisome. It carries out the reaction isopentenyl diphosphate = dimethylallyl diphosphate. The protein operates within isoprenoid biosynthesis; dimethylallyl diphosphate biosynthesis; dimethylallyl diphosphate from isopentenyl diphosphate: step 1/1. Catalyzes the 1,3-allylic rearrangement of the homoallylic substrate isopentenyl (IPP) to its highly electrophilic allylic isomer, dimethylallyl diphosphate (DMAPP). The protein is Isopentenyl-diphosphate Delta-isomerase 1 (IDI1) of Bos taurus (Bovine).